A 113-amino-acid polypeptide reads, in one-letter code: U10-theraphotoxin-Hs2a (113 aa).

The first 21 residues, 1-21 (MNTVRVTFLLVFVLAVSLGQA), serve as a signal peptide directing secretion. The propeptide occupies 22–67 (DEDGNRMEKRQKKTEAENLLLPKLEELDAKLWEEDSVESRNSRQKR). 3 cysteine pairs are disulfide-bonded: Cys68/Cys86, Cys75/Cys91, and Cys85/Cys106.

The protein belongs to the neurotoxin 14 (magi-1) family. 02 (HWTX-XVIc) subfamily. As to expression, expressed by the venom gland.

It is found in the secreted. Probable ion channel inhibitor. This Cyriopagopus schmidti (Chinese bird spider) protein is U10-theraphotoxin-Hs2a.